The following is a 312-amino-acid chain: Acetyl-coenzyme A carboxylase carboxyl transferase subunit alpha (312 aa).

Residues 36–286 (NLEKEISKTY…ADYVKKSLNE (251 aa)) form the CoA carboxyltransferase C-terminal domain.

Belongs to the AccA family. Acetyl-CoA carboxylase is a heterohexamer composed of biotin carboxyl carrier protein (AccB), biotin carboxylase (AccC) and two subunits each of ACCase subunit alpha (AccA) and ACCase subunit beta (AccD).

It localises to the cytoplasm. The enzyme catalyses N(6)-carboxybiotinyl-L-lysyl-[protein] + acetyl-CoA = N(6)-biotinyl-L-lysyl-[protein] + malonyl-CoA. The protein operates within lipid metabolism; malonyl-CoA biosynthesis; malonyl-CoA from acetyl-CoA: step 1/1. Its function is as follows. Component of the acetyl coenzyme A carboxylase (ACC) complex. First, biotin carboxylase catalyzes the carboxylation of biotin on its carrier protein (BCCP) and then the CO(2) group is transferred by the carboxyltransferase to acetyl-CoA to form malonyl-CoA. This is Acetyl-coenzyme A carboxylase carboxyl transferase subunit alpha from Campylobacter jejuni subsp. jejuni serotype O:6 (strain 81116 / NCTC 11828).